We begin with the raw amino-acid sequence, 497 residues long: Serine hydroxymethyltransferase (497 aa).

(6S)-5,6,7,8-tetrahydrofolate-binding positions include Leu176 and 180–182 (GHL). The residue at position 289 (Lys289) is an N6-(pyridoxal phosphate)lysine.

Belongs to the SHMT family. Homodimer. It depends on pyridoxal 5'-phosphate as a cofactor.

The protein resides in the cytoplasm. It catalyses the reaction (6R)-5,10-methylene-5,6,7,8-tetrahydrofolate + glycine + H2O = (6S)-5,6,7,8-tetrahydrofolate + L-serine. It participates in one-carbon metabolism; tetrahydrofolate interconversion. The protein operates within amino-acid biosynthesis; glycine biosynthesis; glycine from L-serine: step 1/1. Functionally, catalyzes the reversible interconversion of serine and glycine with tetrahydrofolate (THF) serving as the one-carbon carrier. This reaction serves as the major source of one-carbon groups required for the biosynthesis of purines, thymidylate, methionine, and other important biomolecules. Also exhibits THF-independent aldolase activity toward beta-hydroxyamino acids, producing glycine and aldehydes, via a retro-aldol mechanism. The chain is Serine hydroxymethyltransferase from Chlamydia trachomatis serovar L2b (strain UCH-1/proctitis).